Consider the following 715-residue polypeptide: Methylcrotonoyl-CoA carboxylase subunit alpha, mitochondrial (715 aa).

The transit peptide at 1 to 38 (MAAAALLAAVDRNQLRRVPILLLQPREWPWKHRTVKYG) directs the protein to the mitochondrion. Residues 45–490 (ITKVLIANRG…HTDFIPQHHK (446 aa)) form the Biotin carboxylation domain. Residue Lys-159 coordinates ATP. The region spanning 163-360 (KSIMAAAGVP…LVEWQLRIAA (198 aa)) is the ATP-grasp domain. Position 193 is an N6-acetyllysine (Lys-193). Residues Lys-201 and 207 to 208 (GG) each bind ATP. Lys-233 carries the post-translational modification N6-acetyllysine. Residues His-251, His-278, and Glu-318 each coordinate ATP. Residue Arg-335 is part of the active site. An N6-acetyllysine modification is found at Lys-490. At Lys-577 the chain carries N6-acetyllysine; alternate. At Lys-577 the chain carries N6-succinyllysine; alternate. The Biotinyl-binding domain occupies 622 to 711 (SIEVGIPVPK…NRHAPLVEFE (90 aa)). N6-biotinyllysine is present on Lys-677.

In terms of assembly, probably a dodecamer composed of six biotin-containing alpha subunits (MCCC1) and six beta (MCCC2) subunits. Interacts (via the biotin carboxylation domain) with SIRT4. Biotin serves as cofactor. Post-translationally, acetylated.

It is found in the mitochondrion matrix. It catalyses the reaction 3-methylbut-2-enoyl-CoA + hydrogencarbonate + ATP = 3-methyl-(2E)-glutaconyl-CoA + ADP + phosphate + H(+). The protein operates within amino-acid degradation; L-leucine degradation; (S)-3-hydroxy-3-methylglutaryl-CoA from 3-isovaleryl-CoA: step 2/3. Biotin-attachment subunit of the 3-methylcrotonyl-CoA carboxylase, an enzyme that catalyzes the conversion of 3-methylcrotonyl-CoA to 3-methylglutaconyl-CoA, a critical step for leucine and isovaleric acid catabolism. The protein is Methylcrotonoyl-CoA carboxylase subunit alpha, mitochondrial of Rattus norvegicus (Rat).